The primary structure comprises 617 residues: MSAKQKNYAIETFTEPERIRNFCIIAHIDHGKSTLADRILDLSGVIEHRDMRDRYLDNMELERERGITIKAQNVRIPWVPKSGAHEGEQLVLQLIDTPGHVDFTYEVSRALEACEGAILLVDAAQGIEAQTLANLYLAMDKDLEIIPVLNKIDLPAADPEKYSQELANIIGCEPEEVLRVSGKTGEGVPELLDRVCELVPHPVGDPDAPARALIFDSVYDTYRGVVTYVRMMDGRLNDREKNKMMSTGTEHDTLEIGVVSPGPTKTKGLSVGEVGYLITGVKDVRQSKVGDTVTLAHNGATEPLQGYAEPKPMVYSGLFPISADQYPELREAIEKLQLNDASLSFEPETSVALGFGFRCGFLGLLHMEITRTRLEREFGLDLISTAPSVVYRVIQEDGTETFVRNPSDWPGGKLQAVYEPMVDMTIIVPEAFLGGTMELCQSKRGQMKNMDFLSQDRVELRYRIPLGEIIFDFFDSLKSRTKGYASLNYEEAGEEQADLVKVDILLQGEPVDAFSAIVHRENAHYYGNKMAVKLKDLIPRQQFEVPIQAAIGSKIIARENIRALRKDVLAKCYGGDISRKRKLLEKQKEGKKRMKNIGTVSVPQEAFVAALSTGGED.

The region spanning 17–203 (ERIRNFCIIA…RVCELVPHPV (187 aa)) is the tr-type G domain. GTP contacts are provided by residues 29-34 (DHGKST) and 150-153 (NKID).

The protein belongs to the TRAFAC class translation factor GTPase superfamily. Classic translation factor GTPase family. LepA subfamily.

The protein resides in the cell membrane. It catalyses the reaction GTP + H2O = GDP + phosphate + H(+). In terms of biological role, required for accurate and efficient protein synthesis under certain stress conditions. May act as a fidelity factor of the translation reaction, by catalyzing a one-codon backward translocation of tRNAs on improperly translocated ribosomes. Back-translocation proceeds from a post-translocation (POST) complex to a pre-translocation (PRE) complex, thus giving elongation factor G a second chance to translocate the tRNAs correctly. Binds to ribosomes in a GTP-dependent manner. This Corynebacterium urealyticum (strain ATCC 43042 / DSM 7109) protein is Elongation factor 4.